The following is a 61-amino-acid chain: uncharacterized protein (61 aa).

This is an uncharacterized protein from Escherichia coli (Bacteriophage T4).